Consider the following 68-residue polypeptide: Gene 42 protein (68 aa).

This chain is Gene 42 protein (42), found in Mycobacterium phage D29 (Mycobacteriophage D29).